Consider the following 553-residue polypeptide: ATP synthase F(1) complex subunit alpha, mitochondrial (553 aa).

The N-terminal 43 residues, methionine 1–leucine 43, are a transit peptide targeting the mitochondrion. A phosphoserine mark is found at serine 53 and serine 65. Serine 76 carries the phosphoserine; alternate modification. Serine 76 is a glycosylation site (O-linked (GlcNAc) serine; alternate). Position 106 is a phosphoserine (serine 106). An N6-acetyllysine mark is found at lysine 123, lysine 126, and lysine 132. Threonine 134 carries the phosphothreonine modification. Lysine 161 carries the post-translational modification N6-acetyllysine; alternate. At lysine 161 the chain carries N6-succinyllysine; alternate. Serine 166 carries the post-translational modification Phosphoserine. Lysine 167 bears the N6-acetyllysine; alternate mark. Lysine 167 is subject to N6-succinyllysine; alternate. A Phosphoserine modification is found at serine 184. Arginine 204 is subject to Omega-N-methylarginine. Positions 215, 217, 218, 219, and 220 each coordinate ATP. Threonine 219 is a binding site for Mg(2+). An N6-acetyllysine; alternate mark is found at lysine 230 and lysine 239. An N6-succinyllysine; alternate mark is found at lysine 230 and lysine 239. Lysine 240 is modified (N6-acetyllysine). N6-acetyllysine; alternate is present on residues lysine 261 and lysine 305. An N6-succinyllysine; alternate mark is found at lysine 261 and lysine 305. Aspartate 312 contacts Mg(2+). The residue at position 427 (lysine 427) is an N6-acetyllysine; alternate. Lysine 427 bears the N6-succinyllysine; alternate mark. Lysine 434 carries the N6-acetyllysine modification. Glutamine 473 and glutamine 475 together coordinate ATP. N6-acetyllysine; alternate occurs at positions 498, 506, 531, and 539. Residues lysine 498, lysine 506, lysine 531, and lysine 539 each carry the N6-succinyllysine; alternate modification. The residue at position 541 (lysine 541) is an N6-acetyllysine.

The protein belongs to the ATPase alpha/beta chains family. Homotrimer. Component of the ATP synthase complex composed at least of ATP5F1A/subunit alpha, ATP5F1B/subunit beta, ATP5MC1/subunit c (homooctomer), MT-ATP6/subunit a, MT-ATP8/subunit 8, ATP5ME/subunit e, ATP5MF/subunit f, ATP5MG/subunit g, ATP5MK/subunit k, ATP5MJ/subunit j, ATP5F1C/subunit gamma, ATP5F1D/subunit delta, ATP5F1E/subunit epsilon, ATP5PF/subunit F6, ATP5PB/subunit b, ATP5PD/subunit d, ATP5PO/subunit OSCP. ATP synthase complex consists of a soluble F(1) head domain (subunits alpha(3) and beta(3)) - the catalytic core - and a membrane F(0) domain - the membrane proton channel (subunits c, a, 8, e, f, g, k and j). These two domains are linked by a central stalk (subunits gamma, delta, and epsilon) rotating inside the F1 region and a stationary peripheral stalk (subunits F6, b, d, and OSCP). Interacts with ATPAF2. Interacts with HRG; the interaction occurs on the surface of T-cells and alters the cell morphology when associated with concanavalin (in vitro). Interacts with PLG (angiostatin peptide); the interaction inhibits most of the angiogenic properties of angiostatin. Interacts with BLOC1S1. Interacts with BCL2L1 isoform BCL-X(L); the interaction mediates the association of BCL2L1 isoform BCL-X(L) with the mitochondrial membrane F(1)F(0) ATP synthase and enhances neurons metabolic efficiency. Interacts with CLN5 and PPT1. Interacts with S100A1; this interaction increases F1-ATPase activity. Interacts with ABCB7; this interaction allows the regulation of cellular iron homeostasis and cellular reactive oxygen species (ROS) levels in cardiomyocytes. Acetylated on lysine residues. BLOC1S1 is required for acetylation.

The protein localises to the mitochondrion inner membrane. The protein resides in the cell membrane. Subunit alpha, of the mitochondrial membrane ATP synthase complex (F(1)F(0) ATP synthase or Complex V) that produces ATP from ADP in the presence of a proton gradient across the membrane which is generated by electron transport complexes of the respiratory chain. ATP synthase complex consist of a soluble F(1) head domain - the catalytic core - and a membrane F(1) domain - the membrane proton channel. These two domains are linked by a central stalk rotating inside the F(1) region and a stationary peripheral stalk. During catalysis, ATP synthesis in the catalytic domain of F(1) is coupled via a rotary mechanism of the central stalk subunits to proton translocation. In vivo, can only synthesize ATP although its ATP hydrolase activity can be activated artificially in vitro. With the catalytic subunit beta (ATP5F1B), forms the catalytic core in the F(1) domain. Subunit alpha does not bear the catalytic high-affinity ATP-binding sites. The protein is ATP synthase F(1) complex subunit alpha, mitochondrial of Pongo abelii (Sumatran orangutan).